The chain runs to 61 residues: Protein MATERNALLY EXPRESSED GENE 6 (61 aa).

A disulfide bridge links C38 with C60.

This sequence belongs to the MEG family. In terms of tissue distribution, ubiquitous.

In Zea mays (Maize), this protein is Protein MATERNALLY EXPRESSED GENE 6 (MEG6).